The following is a 556-amino-acid chain: Probable zinc metalloprotease EGY2, chloroplastic (556 aa).

The N-terminal 64 residues, 1-64 (MNLAVASFRG…VFRKRETLVR (64 aa)), are a transit peptide targeting the chloroplast. The interval 63-133 (VRVTETQTEP…DGDKLEVSSG (71 aa)) is disordered. 7 consecutive transmembrane segments (helical) span residues 267–287 (AVPEWFAAGSFGLVALFTLFL), 311–331 (LPGALVTALVLGVHELGHILV), 336–356 (GIKLGVPFFVPSWQIGSFGAI), 374–394 (AAGPLAGFSLGLILFLIGLFV), 437–457 (PLVIWAWAGLLINGINSIPAG), 484–504 (LLGLSALFSDVAFYWVVLIFF), and 527–547 (LGILVLFLSLLVCLPYPFAFT).

The protein belongs to the peptidase M50B family.

The protein resides in the plastid. The protein localises to the chloroplast membrane. Functionally, probable membrane-associated metalloprotease that may be involved in chloroplast development. In Arabidopsis thaliana (Mouse-ear cress), this protein is Probable zinc metalloprotease EGY2, chloroplastic (EGY2).